The chain runs to 213 residues: Neuroligin-4, X-linked (213 aa).

A disordered region spans residues 1–56; the sequence is FQYVSTTTKVPPPDMTSFPYGTRRSPAKIWPTTKRPAITPANNPKHSKDPHKTGPE. Residues 1 to 73 lie on the Extracellular side of the membrane; the sequence is FQYVSTTTKV…TKRDYSTELS (73 aa). Basic and acidic residues predominate over residues 46–55; that stretch reads HSKDPHKTGP. Residues 74-94 traverse the membrane as a helical segment; that stretch reads VTIAVGASLLFLNILAFAALY. Over 95–213 the chain is Cytoplasmic; the sequence is YKKDKRRHET…LPHGHSTTRV (119 aa). At serine 109 the chain carries Phosphoserine.

It belongs to the type-B carboxylesterase/lipase family. In terms of assembly, homodimer. Interacts with NRXN1 in a calcium-dependent manner. Interaction with neurexins is mediated by heparan sulfate glycan modification on neurexin. Interacts through its C-terminus with DLG4/PSD-95 third PDZ domain.

It localises to the cell membrane. It is found in the postsynaptic density membrane. Cell surface protein involved in cell-cell-interactions via its interactions with neurexin family members. The chain is Neuroligin-4, X-linked (NLGN4X) from Macaca mulatta (Rhesus macaque).